Reading from the N-terminus, the 89-residue chain is Cell division topological specificity factor (89 aa).

The protein belongs to the MinE family.

Prevents the cell division inhibition by proteins MinC and MinD at internal division sites while permitting inhibition at polar sites. This ensures cell division at the proper site by restricting the formation of a division septum at the midpoint of the long axis of the cell. The chain is Cell division topological specificity factor from Klebsiella pneumoniae subsp. pneumoniae (strain ATCC 700721 / MGH 78578).